The primary structure comprises 238 residues: Nuclear transcription factor Y subunit B-9 (238 aa).

Residues 64–70 mediate DNA binding; sequence MPIANVI. The tract at residues 91-102 is subunit association domain (SAD); the sequence is IQECVSEYISFV. Residues 203–238 are disordered; sequence RYYQNGSSGQDESSVGGGSSSSINGMPAFDHYGQYK. Residues 208–227 show a composition bias toward low complexity; it reads GSSGQDESSVGGGSSSSING.

The protein belongs to the NFYB/HAP3 subunit family. As to quaternary structure, heterotrimeric transcription factor composed of three components, NF-YA, NF-YB and NF-YC. NF-YB and NF-YC must interact and dimerize for NF-YA association and DNA binding. Interacts with PRN1. Expressed in green siliques. Present in etiolated seedlings.

Its subcellular location is the nucleus. Functionally, component of the NF-Y/HAP transcription factor complex. The NF-Y complex stimulates the transcription of various genes by recognizing and binding to a CCAAT motif in promoters. Acts as a central regulator of the embryogenesis. Required for the speciation of cotyledon identity and the completion of embryo maturation. Controls seed storage protein genes through the regulation of FUS3 and ABI3. Involved in the blue light (BL) and abscisic acid (ABA) signaling pathways. The sequence is that of Nuclear transcription factor Y subunit B-9 (NFYB9) from Arabidopsis thaliana (Mouse-ear cress).